A 265-amino-acid polypeptide reads, in one-letter code: 3-methyl-2-oxobutanoate hydroxymethyltransferase (265 aa).

Asp-44 and Asp-83 together coordinate Mg(2+). Residues 44-45 (DS), Asp-83, and Lys-113 each bind 3-methyl-2-oxobutanoate. Glu-115 is a Mg(2+) binding site. Catalysis depends on Glu-183, which acts as the Proton acceptor.

The protein belongs to the PanB family. As to quaternary structure, homodecamer; pentamer of dimers. It depends on Mg(2+) as a cofactor.

The protein resides in the cytoplasm. It carries out the reaction 3-methyl-2-oxobutanoate + (6R)-5,10-methylene-5,6,7,8-tetrahydrofolate + H2O = 2-dehydropantoate + (6S)-5,6,7,8-tetrahydrofolate. It functions in the pathway cofactor biosynthesis; (R)-pantothenate biosynthesis; (R)-pantoate from 3-methyl-2-oxobutanoate: step 1/2. In terms of biological role, catalyzes the reversible reaction in which hydroxymethyl group from 5,10-methylenetetrahydrofolate is transferred onto alpha-ketoisovalerate to form ketopantoate. The protein is 3-methyl-2-oxobutanoate hydroxymethyltransferase of Leptospira borgpetersenii serovar Hardjo-bovis (strain JB197).